Here is a 307-residue protein sequence, read N- to C-terminus: Small ribosomal subunit protein uS3 (307 aa).

One can recognise a KH type-2 domain in the interval 17-86 (MDEYFAEQLN…NPQIDAQEVK (70 aa)). Positions 201–226 (IEEPAEKPAEKQVEKPAVAPKKEAAK) are enriched in basic and acidic residues. The tract at residues 201–265 (IEEPAEKPAE…QVEASEDFEE (65 aa)) is disordered. Positions 240 to 265 (PTEEPEVAEPEEAEEAQVEASEDFEE) are enriched in acidic residues.

Belongs to the universal ribosomal protein uS3 family. Part of the 30S ribosomal subunit.

Functionally, binds the lower part of the 30S subunit head. This is Small ribosomal subunit protein uS3 from Methanosarcina mazei (strain ATCC BAA-159 / DSM 3647 / Goe1 / Go1 / JCM 11833 / OCM 88) (Methanosarcina frisia).